Consider the following 222-residue polypeptide: Small ribosomal subunit protein eS1 (222 aa).

Belongs to the eukaryotic ribosomal protein eS1 family.

This chain is Small ribosomal subunit protein eS1, found in Pyrobaculum neutrophilum (strain DSM 2338 / JCM 9278 / NBRC 100436 / V24Sta) (Thermoproteus neutrophilus).